The following is a 298-amino-acid chain: tRNA dimethylallyltransferase 2 (298 aa).

An ATP-binding site is contributed by 19 to 26 (GATATGKT). 21 to 26 (TATGKT) is a binding site for substrate. An interaction with substrate tRNA region spans residues 44 to 47 (DSRQ).

This sequence belongs to the IPP transferase family. Monomer. Mg(2+) is required as a cofactor.

It catalyses the reaction adenosine(37) in tRNA + dimethylallyl diphosphate = N(6)-dimethylallyladenosine(37) in tRNA + diphosphate. In terms of biological role, catalyzes the transfer of a dimethylallyl group onto the adenine at position 37 in tRNAs that read codons beginning with uridine, leading to the formation of N6-(dimethylallyl)adenosine (i(6)A). The polypeptide is tRNA dimethylallyltransferase 2 (Treponema denticola (strain ATCC 35405 / DSM 14222 / CIP 103919 / JCM 8153 / KCTC 15104)).